Here is a 350-residue protein sequence, read N- to C-terminus: Ion-translocating oxidoreductase complex subunit D (350 aa).

4 helical membrane passes run 20 to 40 (VMLWVILAALPGLLAQTLFFG), 42 to 62 (GNLINVVWCIALALGSEAAFL), 89 to 109 (LPQFTPWWVSGIAVVSAIVVA), and 120 to 140 (PFNPAMVGYALALISFPVAMT). FMN phosphoryl threonine is present on Thr-178. 5 helical membrane-spanning segments follow: residues 204–224 (LIARGWEWVNLAFLAGGVLLI), 228–248 (IITWHIPVAFLAGIAAMSLAF), 255–275 (YAPLQLHLLAGGTMLGAFFIA), 282–302 (ATSHQGKLIYGAGIGVLVYLI), and 306–326 (GNYPDAVAFSVLLMNFAVPFI).

The protein belongs to the NqrB/RnfD family. As to quaternary structure, the complex is composed of six subunits: RnfA, RnfB, RnfC, RnfD, RnfE and RnfG. FMN serves as cofactor.

Its subcellular location is the cell inner membrane. Its function is as follows. Part of a membrane-bound complex that couples electron transfer with translocation of ions across the membrane. This is Ion-translocating oxidoreductase complex subunit D from Marinobacter nauticus (strain ATCC 700491 / DSM 11845 / VT8) (Marinobacter aquaeolei).